A 256-amino-acid polypeptide reads, in one-letter code: Ribonuclease 3 (256 aa).

The 123-residue stretch at 3–125 (LDALQQRLGY…IVGAVFLDAG (123 aa)) folds into the RNase III domain. Glutamate 38 serves as a coordination point for Mg(2+). The active site involves aspartate 42. Positions 111 and 114 each coordinate Mg(2+). The active site involves glutamate 114. A DRBM domain is found at 152–222 (DAKTLLQEYL…AKLALDEVQK (71 aa)). The tract at residues 229 to 256 (KRSRAERTGKTRKQPQPQDPQLSLRLKE) is disordered.

Belongs to the ribonuclease III family. Homodimer. Mg(2+) is required as a cofactor.

It localises to the cytoplasm. The catalysed reaction is Endonucleolytic cleavage to 5'-phosphomonoester.. In terms of biological role, digests double-stranded RNA. Involved in the processing of primary rRNA transcript to yield the immediate precursors to the large and small rRNAs (23S and 16S). Processes some mRNAs, and tRNAs when they are encoded in the rRNA operon. Processes pre-crRNA and tracrRNA of type II CRISPR loci if present in the organism. The protein is Ribonuclease 3 of Cupriavidus taiwanensis (strain DSM 17343 / BCRC 17206 / CCUG 44338 / CIP 107171 / LMG 19424 / R1) (Ralstonia taiwanensis (strain LMG 19424)).